The primary structure comprises 342 residues: Dihydroorotate dehydrogenase (quinone) (342 aa).

FMN-binding positions include 61 to 65 (AGLDK) and T85. Residue K65 coordinates substrate. A substrate-binding site is contributed by 110–114 (NRMGF). Positions 138 and 171 each coordinate FMN. Substrate is bound at residue N171. The Nucleophile role is filled by S174. N176 provides a ligand contact to substrate. The FMN site is built by K216 and T244. 245–246 (NT) serves as a coordination point for substrate. FMN-binding positions include G267, G296, and 317 to 318 (YS).

The protein belongs to the dihydroorotate dehydrogenase family. Type 2 subfamily. In terms of assembly, monomer. FMN is required as a cofactor.

It localises to the cell membrane. The enzyme catalyses (S)-dihydroorotate + a quinone = orotate + a quinol. It functions in the pathway pyrimidine metabolism; UMP biosynthesis via de novo pathway; orotate from (S)-dihydroorotate (quinone route): step 1/1. Its function is as follows. Catalyzes the conversion of dihydroorotate to orotate with quinone as electron acceptor. The chain is Dihydroorotate dehydrogenase (quinone) from Pseudomonas paraeruginosa (strain DSM 24068 / PA7) (Pseudomonas aeruginosa (strain PA7)).